We begin with the raw amino-acid sequence, 271 residues long: 2-aminophenol 1,6-dioxygenase subunit alpha (271 aa).

This sequence belongs to the LigB/MhpB extradiol dioxygenase family. The APD complex is a heterotetramer of 2 alpha (CnbCa) and 2 beta (CnbCb) subunits.

It functions in the pathway xenobiotic degradation; nitrobenzene degradation. The protein operates within xenobiotic degradation; 4-chloronitrobenzene degradation. Functionally, component of the 2-aminophenol 1,6-dioxygenase (APD) complex that catalyzes the ring fission of 2-aminophenol to produce 2-aminomuconic semialdehyde. CnbCa may have a role in the stability of the complex. The complex is also active on other substrates such as 2-amino-5-chlorophenol (68% activity), protocatechuate (33% activity) and catechol (5% activity). Both 2-aminophenol and 2-amino-5-cholorophenol are likely native substrates for this dioxygenase which is involved in the reductive degradation pathway of both nitrobenzene (NB) and 4-chloronitrobenzene (4-CNB), allowing C.testosteroni strain CNB-1 to grow on these compounds as sole source of carbon, nitrogen, and energy. This Comamonas testosteroni (Pseudomonas testosteroni) protein is 2-aminophenol 1,6-dioxygenase subunit alpha.